Reading from the N-terminus, the 122-residue chain is UPF0102 protein Atu0303 (122 aa).

The protein belongs to the UPF0102 family.

This chain is UPF0102 protein Atu0303, found in Agrobacterium fabrum (strain C58 / ATCC 33970) (Agrobacterium tumefaciens (strain C58)).